Reading from the N-terminus, the 158-residue chain is Putative tyrosine-protein phosphatase OCA1 (158 aa).

The Tyrosine-protein phosphatase domain maps to 7–158; it reads NYGMVEENFY…DEELVFGASY (152 aa). The active-site Phosphocysteine intermediate is the C99.

The protein belongs to the protein-tyrosine phosphatase family.

Its subcellular location is the cytoplasm. It carries out the reaction O-phospho-L-tyrosyl-[protein] + H2O = L-tyrosyl-[protein] + phosphate. Its function is as follows. Putative tyrosine-protein phosphatase required for protection against superoxide stress. The protein is Putative tyrosine-protein phosphatase OCA1 (OCA1) of Mycosarcoma maydis (Corn smut fungus).